A 248-amino-acid chain; its full sequence is Granulin (248 aa).

Belongs to the polyhedrin family.

In terms of biological role, component of the virus occlusion bodies, which are large proteinaceous structures, that protect the virus from the outside environment for extended periods until they are ingested by insect larvae. In Trichoplusia ni (Cabbage looper), this protein is Granulin.